Consider the following 158-residue polypeptide: Large ribosomal subunit protein uL23 (158 aa).

The disordered stretch occupies residues 1–43 (MPPKSSTKAEPKASSAKTQVAKAKSAKKAVVKGTSSKTQRRIR). Over residues 12–23 (KASSAKTQVAKA) the composition is skewed to low complexity.

It belongs to the universal ribosomal protein uL23 family.

This protein binds to a specific region on the 26S rRNA. In Puccinia graminis (Black stem rust fungus), this protein is Large ribosomal subunit protein uL23.